The following is a 636-amino-acid chain: Transcription termination factor FttA (636 aa).

The segment at 4–72 is KHa; sequence ELELKRIRDE…VVFRWNVDKR (69 aa). Positions 73-140 are KHb; it reads KDPAETKDYI…WQPKTIRTPP (68 aa). Residues 181–383 are metallo-beta-lactamase N-terminus; that stretch reads NIRMNALGGF…LLIEATYGGP (203 aa). The Zn(2+) site is built by His242, His244, Asp246, His247, His329, and Asp352. The interval 384–577 is beta-Casp; sequence QDRIPSRQES…LKVFTLEGFS (194 aa). Residues 578–636 form a metallo-beta-lactamase C-terminus region; sequence GHSSRSQISQFLRRIQPRPKVVIVNHGEESKCVSLSTMIHKKLRKSTKSPKNLEVVLLK. A Zn(2+)-binding site is contributed by His603.

It belongs to the metallo-beta-lactamase superfamily. RNA-metabolizing metallo-beta-lactamase-like family. FttA subfamily. Homodimer. Interacts with RNA polymerase (RNAP), interacts with the Spt4-Spt5 complex. Zn(2+) serves as cofactor.

In terms of biological role, terminates transcription on the whole genome. Termination is linked to FttA-mediated RNA cleavage and does not require NTP hydrolysis. Cleaves endonucleolytically at the RNA exit channel of RNA polymerase (RNAP); the 5'-3' exonuclease activity of this protein degrades the nascent RNA released from RNAP. Its function is as follows. Terminates transcription genome-wide in M.maripaludis. Restores wild-type growth to a strain of Methanococcus maripaludis depleted for this gene at 22 degrees Celsius and prevents transcriptional read-through. Transcription termination is most effective in vivo on RNAs with more than one U4-tract in their 3'-ends. Has endonuclease activity after U-rich tracts in transcription termination sequences. This Lokiarchaeum sp. (strain GC14_75) protein is Transcription termination factor FttA.